We begin with the raw amino-acid sequence, 213 residues long: Holliday junction branch migration complex subunit RuvA (213 aa).

The segment at Met-1–Leu-63 is domain I. The domain II stretch occupies residues Asp-64–Leu-142. The segment at Pro-143 to Gly-160 is flexible linker. The tract at residues Gly-161–Ala-213 is domain III.

The protein belongs to the RuvA family. Homotetramer. Forms an RuvA(8)-RuvB(12)-Holliday junction (HJ) complex. HJ DNA is sandwiched between 2 RuvA tetramers; dsDNA enters through RuvA and exits via RuvB. An RuvB hexamer assembles on each DNA strand where it exits the tetramer. Each RuvB hexamer is contacted by two RuvA subunits (via domain III) on 2 adjacent RuvB subunits; this complex drives branch migration. In the full resolvosome a probable DNA-RuvA(4)-RuvB(12)-RuvC(2) complex forms which resolves the HJ.

It localises to the cytoplasm. The RuvA-RuvB-RuvC complex processes Holliday junction (HJ) DNA during genetic recombination and DNA repair, while the RuvA-RuvB complex plays an important role in the rescue of blocked DNA replication forks via replication fork reversal (RFR). RuvA specifically binds to HJ cruciform DNA, conferring on it an open structure. The RuvB hexamer acts as an ATP-dependent pump, pulling dsDNA into and through the RuvAB complex. HJ branch migration allows RuvC to scan DNA until it finds its consensus sequence, where it cleaves and resolves the cruciform DNA. This chain is Holliday junction branch migration complex subunit RuvA, found in Maricaulis maris (strain MCS10) (Caulobacter maris).